The chain runs to 106 residues: FSQQTIPPSAKYGGILTVTMSPGDGDGPELMLTVXXXXXSACVPVDFEEVVVSSNADEEDIRTSLDLYANVIHCKLGDGLFLQCCKNIANPTATLLASCMMLDHLK.

The protein belongs to the isocitrate and isopropylmalate dehydrogenases family. As to quaternary structure, heterooligomer of subunits alpha (IDH3A), beta (IDH3B), and gamma (IDH3G) in the apparent ratio of 2:1:1. The heterodimer containing one IDH3A and one IDH3B subunit and the heterodimer containing one IDH3A and one IDH3G subunit assemble into a heterotetramer (which contains two subunits of IDH3A, one of IDH3B and one of IDH3G) and further into the heterooctamer.

It localises to the mitochondrion. With respect to regulation, the heterotetramer and the heterodimer composed of IDH3A and IDH3G subunits can be allosterically activated by citrate (CIT) or/and ADP, and the two activators can act independently or synergistically. The heterodimer composed of IDH3A and IDH3B subunits cannot be allosterically regulated and the allosteric regulation of the heterotetramer is through the IDH3G subunit and not the IDH3B subunit. The IDH3G subunit contains the allosteric site which consists of a CIT-binding site and an ADP-binding site, and the binding of CIT and ADP causes conformational changes at the allosteric site which are transmitted to the active site in the catalytic subunit (IDH3A) through a cascade of conformational changes at the heterodimer interface, leading to stabilization of the isocitrate-binding at the active site and thus activation of the enzyme. ATP can activate the heterotetramer and the heterodimer composed of IDH3A and IDH3G subunits at low concentrations but inhibits their activities at high concentrations, whereas ATP exhibits only inhibitory effect on the heterodimer composed of IDH3A and IDH3B subunits. Its function is as follows. Regulatory subunit which plays a role in the allosteric regulation of the enzyme catalyzing the decarboxylation of isocitrate (ICT) into alpha-ketoglutarate. The heterodimer composed of the alpha (IDH3A) and beta (IDH3B) subunits and the heterodimer composed of the alpha (IDH3A) and gamma (IDH3G) subunits, have considerable basal activity but the full activity of the heterotetramer (containing two subunits of IDH3A, one of IDH3B and one of IDH3G) requires the assembly and cooperative function of both heterodimers. The polypeptide is Isocitrate dehydrogenase [NAD] subunit gamma, mitochondrial (IDH3G) (Sus scrofa (Pig)).